Consider the following 271-residue polypeptide: Putative phosphoenolpyruvate synthase regulatory protein (271 aa).

ADP is bound at residue 151-158 (GVSRSGKT).

Belongs to the pyruvate, phosphate/water dikinase regulatory protein family. PSRP subfamily.

The catalysed reaction is [pyruvate, water dikinase] + ADP = [pyruvate, water dikinase]-phosphate + AMP + H(+). It catalyses the reaction [pyruvate, water dikinase]-phosphate + phosphate + H(+) = [pyruvate, water dikinase] + diphosphate. Bifunctional serine/threonine kinase and phosphorylase involved in the regulation of the phosphoenolpyruvate synthase (PEPS) by catalyzing its phosphorylation/dephosphorylation. The protein is Putative phosphoenolpyruvate synthase regulatory protein of Burkholderia ambifaria (strain MC40-6).